The sequence spans 51 residues: Large ribosomal subunit protein eL40 (51 aa).

The protein belongs to the eukaryotic ribosomal protein eL40 family.

The protein is Large ribosomal subunit protein eL40 of Thermococcus gammatolerans (strain DSM 15229 / JCM 11827 / EJ3).